Reading from the N-terminus, the 447-residue chain is Keratin, type I cytoskeletal 15 (447 aa).

The head stretch occupies residues M1–N93. 4 positions are modified to phosphoserine: S16, S28, S33, and S47. Residues E94–W129 form a coil 1A region. One can recognise an IF rod domain in the interval E94–M406. A Phosphothreonine modification is found at T120. The segment at Y130–T148 is linker 1. The coil 1B stretch occupies residues M149–F240. Residues S241–L260 are linker 12. Positions T261 to Q402 are coil 2. Residue K289 forms a Glycyl lysine isopeptide (Lys-Gly) (interchain with G-Cter in SUMO2) linkage. A phosphothreonine mark is found at T290 and T312. Positions D403 to S447 are tail. K438 is covalently cross-linked (Glycyl lysine isopeptide (Lys-Gly) (interchain with G-Cter in SUMO1); alternate). A Glycyl lysine isopeptide (Lys-Gly) (interchain with G-Cter in SUMO2); alternate cross-link involves residue K438.

The protein belongs to the intermediate filament family. Heterotetramer of two type I and two type II keratins. Forms a heterodimer with KRT14. Interacts with NOD2.

This Rattus norvegicus (Rat) protein is Keratin, type I cytoskeletal 15.